Consider the following 194-residue polypeptide: ATP-dependent Clp protease proteolytic subunit 4 (194 aa).

Catalysis depends on Ser-100, which acts as the Nucleophile. The active site involves His-125.

This sequence belongs to the peptidase S14 family. Fourteen ClpP subunits assemble into 2 heptameric rings which stack back to back to give a disk-like structure with a central cavity, resembling the structure of eukaryotic proteasomes.

The protein localises to the cytoplasm. The catalysed reaction is Hydrolysis of proteins to small peptides in the presence of ATP and magnesium. alpha-casein is the usual test substrate. In the absence of ATP, only oligopeptides shorter than five residues are hydrolyzed (such as succinyl-Leu-Tyr-|-NHMec, and Leu-Tyr-Leu-|-Tyr-Trp, in which cleavage of the -Tyr-|-Leu- and -Tyr-|-Trp bonds also occurs).. Cleaves peptides in various proteins in a process that requires ATP hydrolysis. Has a chymotrypsin-like activity. Plays a major role in the degradation of misfolded proteins. In Rhodococcus jostii (strain RHA1), this protein is ATP-dependent Clp protease proteolytic subunit 4.